A 239-amino-acid polypeptide reads, in one-letter code: 7-cyano-7-deazaguanine synthase (239 aa).

16 to 26 (FSGGQDSTTCL) contributes to the ATP binding site. Cys-204, Cys-219, Cys-222, and Cys-225 together coordinate Zn(2+).

It belongs to the QueC family. Requires Zn(2+) as cofactor.

The enzyme catalyses 7-carboxy-7-deazaguanine + NH4(+) + ATP = 7-cyano-7-deazaguanine + ADP + phosphate + H2O + H(+). Its pathway is purine metabolism; 7-cyano-7-deazaguanine biosynthesis. Catalyzes the ATP-dependent conversion of 7-carboxy-7-deazaguanine (CDG) to 7-cyano-7-deazaguanine (preQ(0)). The protein is 7-cyano-7-deazaguanine synthase of Polaromonas naphthalenivorans (strain CJ2).